The chain runs to 244 residues: Myrosinase MB1 (244 aa).

N32 carries an N-linked (GlcNAc...) asparagine glycan. Y51 lines the substrate pocket. The Nucleophile role is filled by E125. Residues W173 and 180 to 181 contribute to the substrate site; that span reads EF. N216 carries an N-linked (GlcNAc...) asparagine glycan.

The protein belongs to the glycosyl hydrolase 1 family. Homodimer. In vacuoles called myrosin grains of a certain class of cells, myrosin cells, distributed in the cotyledons and the axis of the embryo as well as in different organs of the growing plant.

It localises to the vacuole. The catalysed reaction is a thioglucoside + H2O = a sugar + a thiol.. Its function is as follows. Degradation of glucosinolates (glucose residue linked by a thioglucoside bound to an amino acid derivative) to glucose, sulfate and any of the products: thiocyanates, isothiocyanates, nitriles, epithionitriles or oxazolidine-2-thiones. The polypeptide is Myrosinase MB1 (Sinapis alba (White mustard)).